We begin with the raw amino-acid sequence, 96 residues long: Large ribosomal subunit protein uL23 (96 aa).

This sequence belongs to the universal ribosomal protein uL23 family. Part of the 50S ribosomal subunit. Contacts protein L29, and trigger factor when it is bound to the ribosome.

One of the early assembly proteins it binds 23S rRNA. One of the proteins that surrounds the polypeptide exit tunnel on the outside of the ribosome. Forms the main docking site for trigger factor binding to the ribosome. This is Large ribosomal subunit protein uL23 from Bacillus cytotoxicus (strain DSM 22905 / CIP 110041 / 391-98 / NVH 391-98).